Here is a 432-residue protein sequence, read N- to C-terminus: Putative D-alanyl-D-alanine carboxypeptidase (432 aa).

Residues Ala7–Leu25 traverse the membrane as a helical; Signal-anchor segment.

This sequence belongs to the peptidase S12 family. YfeW subfamily.

Its subcellular location is the cell inner membrane. It catalyses the reaction Preferential cleavage: (Ac)2-L-Lys-D-Ala-|-D-Ala. Also transpeptidation of peptidyl-alanyl moieties that are N-acyl substituents of D-alanine.. This Salmonella schwarzengrund (strain CVM19633) protein is Putative D-alanyl-D-alanine carboxypeptidase.